The sequence spans 393 residues: PPE family protein PPE26 (393 aa).

It belongs to the mycobacterial PPE family. Interacts with human TLR2.

Functionally, probably plays a key role in regulating innate and adaptive immune responses through human Toll-like receptor 2 (TLR2). Interacts with TLR2, leading to the subsequent activation of the mitogen-activated protein kinase (MAPK) and nuclear factor kappa B (NF-kappa-B) signaling pathways. Stimulates macrophage activation by augmenting pro-inflammatory cytokine production (TNF-alpha, IL-6 and IL-12p40) and the expression of cell surface molecules (CD80, CD86, MHC class I and II). Also participates in adaptive immunity by directing Th1-polarised immune responses. This Mycobacterium tuberculosis (strain ATCC 25618 / H37Rv) protein is PPE family protein PPE26.